Reading from the N-terminus, the 506-residue chain is Glutamate--tRNA ligase (506 aa).

Positions 12–22 match the 'HIGH' region motif; it reads PSPTGDPHVGT. Residues 253 to 257 carry the 'KMSKS' region motif; it reads KLSKR. K256 lines the ATP pocket.

This sequence belongs to the class-I aminoacyl-tRNA synthetase family. Glutamate--tRNA ligase type 1 subfamily. As to quaternary structure, monomer.

It is found in the cytoplasm. The enzyme catalyses tRNA(Glu) + L-glutamate + ATP = L-glutamyl-tRNA(Glu) + AMP + diphosphate. Its function is as follows. Catalyzes the attachment of glutamate to tRNA(Glu) in a two-step reaction: glutamate is first activated by ATP to form Glu-AMP and then transferred to the acceptor end of tRNA(Glu). The chain is Glutamate--tRNA ligase from Chlamydia muridarum (strain MoPn / Nigg).